The chain runs to 133 residues: Ribonuclease P protein component (133 aa).

It belongs to the RnpA family. Consists of a catalytic RNA component (M1 or rnpB) and a protein subunit.

It catalyses the reaction Endonucleolytic cleavage of RNA, removing 5'-extranucleotides from tRNA precursor.. In terms of biological role, RNaseP catalyzes the removal of the 5'-leader sequence from pre-tRNA to produce the mature 5'-terminus. It can also cleave other RNA substrates such as 4.5S RNA. The protein component plays an auxiliary but essential role in vivo by binding to the 5'-leader sequence and broadening the substrate specificity of the ribozyme. The sequence is that of Ribonuclease P protein component from Bartonella quintana (strain Toulouse) (Rochalimaea quintana).